The primary structure comprises 116 residues: MWDPLVNDFPKSLHGFRCMLAIKYLQYIQENYPSNSLGFVYLTELIQVLRIRKHAKAELRYRLLYPDVECAEEADLRHPAFLTCHCGKCPCQREKEEVDQPTHVEETEILSVIPLS.

It belongs to the geminiviridae protein AV2/V2 family. Interacts with host SGS3.

The protein resides in the host cytoplasm. Its subcellular location is the host perinuclear region. In terms of biological role, through its interaction with host SGS3, acts as a suppressor of RNA-mediated gene silencing, also known as post-transcriptional gene silencing (PTGS), a mechanism of plant viral defense that limits the accumulation of viral RNAs. This chain is Protein AV2, found in Mungbean yellow mosaic virus (strain Vigna) (MYMV).